The following is a 1755-amino-acid chain: Transposon Ty1-MR2 Gag-Pol polyprotein (1755 aa).

Composition is skewed to polar residues over residues Met1 to Pro10, Thr48 to Ser60, and Gln127 to Phe152. 3 disordered regions span residues Met1 to Gln93, Pro126 to Pro173, and Gly352 to Thr421. Over residues Thr153–Thr165 the composition is skewed to low complexity. The segment at Asn299–His401 is RNA-binding. A compositionally biased stretch (low complexity) spans Asn402–Ser418. A Phosphoserine modification is found at Ser416. The For protease activity; shared with dimeric partner role is filled by Asp461. The segment at Asn583–Cys640 is integrase-type zinc finger-like. An Integrase catalytic domain is found at Asn660 to Pro835. The Mg(2+) site is built by Asp671 and Asp736. Disordered stretches follow at residues Ser956–Lys1087, Arg1092–Pro1111, and Asp1130–Glu1186. A compositionally biased stretch (low complexity) spans Ser960–Thr969. A compositionally biased stretch (polar residues) spans Ser1005 to Thr1015. A compositionally biased stretch (basic and acidic residues) spans Glu1038–Ser1053. Polar residues-rich tracts occupy residues Tyr1054–Asp1082 and Pro1101–Pro1111. Residues Lys1178–Arg1212 carry the Bipartite nuclear localization signal motif. The 139-residue stretch at Asn1338–Gln1476 folds into the Reverse transcriptase Ty1/copia-type domain. Mg(2+) is bound by residues Asp1346, Asp1427, Asp1428, Asp1610, Glu1652, and Asp1685. The RNase H Ty1/copia-type domain maps to Asp1610–Lys1752.

As to quaternary structure, the capsid protein forms a homotrimer, from which the VLPs are assembled. The protease is a homodimer, whose active site consists of two apposed aspartic acid residues. Initially, virus-like particles (VLPs) are composed of the structural unprocessed proteins Gag and Gag-Pol, and also contain the host initiator methionine tRNA (tRNA(i)-Met) which serves as a primer for minus-strand DNA synthesis, and a dimer of genomic Ty RNA. Processing of the polyproteins occurs within the particle and proceeds by an ordered pathway, called maturation. First, the protease (PR) is released by autocatalytic cleavage of the Gag-Pol polyprotein yielding capsid protein p45 and a Pol-p154 precursor protein. This cleavage is a prerequisite for subsequent processing of Pol-p154 at the remaining sites to release the mature structural and catalytic proteins. Maturation takes place prior to the RT reaction and is required to produce transposition-competent VLPs.

It localises to the cytoplasm. Its subcellular location is the nucleus. It carries out the reaction DNA(n) + a 2'-deoxyribonucleoside 5'-triphosphate = DNA(n+1) + diphosphate. The enzyme catalyses Endonucleolytic cleavage to 5'-phosphomonoester.. In terms of biological role, capsid protein (CA) is the structural component of the virus-like particle (VLP), forming the shell that encapsulates the retrotransposons dimeric RNA genome. The particles are assembled from trimer-clustered units and there are holes in the capsid shells that allow for the diffusion of macromolecules. CA also has nucleocapsid-like chaperone activity, promoting primer tRNA(i)-Met annealing to the multipartite primer-binding site (PBS), dimerization of Ty1 RNA and initiation of reverse transcription. Its function is as follows. The aspartyl protease (PR) mediates the proteolytic cleavages of the Gag and Gag-Pol polyproteins after assembly of the VLP. Reverse transcriptase/ribonuclease H (RT) is a multifunctional enzyme that catalyzes the conversion of the retro-elements RNA genome into dsDNA within the VLP. The enzyme displays a DNA polymerase activity that can copy either DNA or RNA templates, and a ribonuclease H (RNase H) activity that cleaves the RNA strand of RNA-DNA heteroduplexes during plus-strand synthesis and hydrolyzes RNA primers. The conversion leads to a linear dsDNA copy of the retrotransposon that includes long terminal repeats (LTRs) at both ends. Functionally, integrase (IN) targets the VLP to the nucleus, where a subparticle preintegration complex (PIC) containing at least integrase and the newly synthesized dsDNA copy of the retrotransposon must transit the nuclear membrane. Once in the nucleus, integrase performs the integration of the dsDNA into the host genome. The chain is Transposon Ty1-MR2 Gag-Pol polyprotein (TY1B-MR2) from Saccharomyces cerevisiae (strain ATCC 204508 / S288c) (Baker's yeast).